The chain runs to 188 residues: Single-stranded DNA-binding protein DdrB (188 aa).

Residues Tyr-140 to Phe-188 form a disordered region. Low complexity predominate over residues Gly-152–Ala-173.

In terms of assembly, homopentamer arranged in a ring-structure; DNA binds between subunits and along the top of the ring. The pentamers self-associate to coat ssDNA in higher-ordered structures; oligomerization facilitates the assembly of extended nucleoprotein complexes. Self-assembly does not however require ssDNA-binding. Interacts with SSB.

In terms of biological role, ssDNA-binding protein that contributes to the ionizing radiation resistance of D.radiodurans. Plays a role in DNA repair and genome reconstitution in a RecA-independent process. Required for recovery from severe genomic fragmentation as a result of exposure to severe levels of ionizing radiation. Binds ssDNA but not dsDNA. Stimulates annealing of complementary ssDNA. Does not complement an ssb disruption. This Deinococcus radiodurans (strain ATCC 13939 / DSM 20539 / JCM 16871 / CCUG 27074 / LMG 4051 / NBRC 15346 / NCIMB 9279 / VKM B-1422 / R1) protein is Single-stranded DNA-binding protein DdrB (ddrB).